A 296-amino-acid chain; its full sequence is Beta-lactamase (296 aa).

The N-terminal stretch at 1–21 is a signal peptide; it reads MKAYFIAILTLFTCIATVVRA. Ser-66 serves as the catalytic Acyl-ester intermediate. 235 to 237 contacts substrate; the sequence is KTG.

This sequence belongs to the class-A beta-lactamase family.

The enzyme catalyses a beta-lactam + H2O = a substituted beta-amino acid. This chain is Beta-lactamase (cblA), found in Bacteroides uniformis.